A 105-amino-acid polypeptide reads, in one-letter code: MYRLAMRTWLAIVIVVVGTSLLFDTASASFIDNTCRGVMGNRDIYKKVVRVCEDCTNIFRLPGLDGMCRNRCFYNEWFLICLKAANREDEIEKFRVWISILNAGQ.

The first 28 residues, 1-28 (MYRLAMRTWLAIVIVVVGTSLLFDTASA), serve as a signal peptide directing secretion. 3 disulfides stabilise this stretch: C35–C72, C52–C68, and C55–C81.

The protein belongs to the arthropod CHH/MIH/GIH/VIH hormone family. As to expression, produced by the medulla terminalis X-organ in the eyestalks and transported to the sinus gland where it is stored and released.

Its subcellular location is the secreted. Inhibits Y-organs where molting hormone (ecdysteroid) is secreted. A molting cycle is initiated when MIH secretion diminishes or stops. Has little or no hyperglycemic activity. The sequence is that of Molt-inhibiting hormone from Penaeus japonicus (Kuruma prawn).